The following is an 842-amino-acid chain: Glucans biosynthesis glucosyltransferase H (842 aa).

The next 7 helical transmembrane spans lie at 140 to 160 (ILLL…KTIL), 194 to 214 (ILIL…TALM), 513 to 533 (VFLT…FLAL), 568 to 588 (IALF…SIIL), 615 to 635 (VLLA…AFLG), 656 to 676 (FMRH…MAWL), and 680 to 700 (FLFW…VSAI).

The protein belongs to the glycosyltransferase 2 family. OpgH subfamily.

The protein resides in the cell inner membrane. Its pathway is glycan metabolism; osmoregulated periplasmic glucan (OPG) biosynthesis. Involved in the biosynthesis of osmoregulated periplasmic glucans (OPGs). This Klebsiella pneumoniae subsp. pneumoniae (strain ATCC 700721 / MGH 78578) protein is Glucans biosynthesis glucosyltransferase H.